We begin with the raw amino-acid sequence, 329 residues long: Vitamin B12 import system permease protein BtuC (329 aa).

The next 9 helical transmembrane spans lie at Trp-18–Glu-38, Leu-64–Phe-84, Pro-91–Gly-111, Leu-115–Leu-135, Leu-149–Phe-169, Trp-191–Cys-208, Gly-243–Ile-263, Val-277–Ala-297, and Glu-305–Leu-325.

Belongs to the binding-protein-dependent transport system permease family. FecCD subfamily. In terms of assembly, the complex is composed of two ATP-binding proteins (BtuD), two transmembrane proteins (BtuC) and a solute-binding protein (BtuF).

The protein localises to the cell inner membrane. Its function is as follows. Part of the ABC transporter complex BtuCDF involved in vitamin B12 import. Involved in the translocation of the substrate across the membrane. The sequence is that of Vitamin B12 import system permease protein BtuC from Salmonella arizonae (strain ATCC BAA-731 / CDC346-86 / RSK2980).